Reading from the N-terminus, the 213-residue chain is High frequency lysogenization protein HflD homolog (213 aa).

Belongs to the HflD family.

It is found in the cytoplasm. The protein resides in the cell inner membrane. This Alcanivorax borkumensis (strain ATCC 700651 / DSM 11573 / NCIMB 13689 / SK2) protein is High frequency lysogenization protein HflD homolog.